The sequence spans 151 residues: Deoxyuridine 5'-triphosphate nucleotidohydrolase (151 aa).

Substrate contacts are provided by residues 70 to 72 (RSG), Asn-83, 87 to 89 (LID), and Met-97.

The protein belongs to the dUTPase family. Mg(2+) serves as cofactor.

It catalyses the reaction dUTP + H2O = dUMP + diphosphate + H(+). The protein operates within pyrimidine metabolism; dUMP biosynthesis; dUMP from dCTP (dUTP route): step 2/2. Functionally, this enzyme is involved in nucleotide metabolism: it produces dUMP, the immediate precursor of thymidine nucleotides and it decreases the intracellular concentration of dUTP so that uracil cannot be incorporated into DNA. This chain is Deoxyuridine 5'-triphosphate nucleotidohydrolase, found in Pseudomonas syringae pv. syringae (strain B728a).